A 945-amino-acid polypeptide reads, in one-letter code: Cysteine-rich, acidic integral membrane protein (945 aa).

Residues 1-20 form a disordered region; sequence MGNEAGPIFEESNAEVGTPP. An N-terminal signal peptide occupies residues 1–23; the sequence is MGNEAGPIFEESNAEVGTPPADA. The Extracellular segment spans residues 24–882; it reads VHDDFFFDYK…GKGSSVSAGL (859 aa). 2 N-linked (GlcNAc...) asparagine glycosylation sites follow: Asn-34 and Asn-43. A run of 66 repeats spans residues 40-51, 52-63, 64-75, 76-87, 88-99, 100-111, 112-123, 124-135, 136-147, 148-159, 160-171, 172-183, 184-195, 196-207, 208-219, 220-231, 232-243, 244-255, 256-267, 268-279, 280-291, 292-303, 304-315, 316-327, 328-339, 340-351, 352-363, 364-375, 376-387, 388-399, 400-411, 412-423, 424-435, 436-447, 448-459, 460-471, 472-483, 484-495, 496-507, 508-519, 520-531, 532-543, 544-555, 556-567, 568-579, 580-591, 592-603, 604-615, 616-627, 628-639, 640-651, 652-663, 664-675, 676-687, 688-699, 700-711, 712-723, 724-735, 736-747, 748-759, 760-771, 772-783, 784-795, 796-807, 808-819, and 820-831. Positions 40-831 are 66 X 12 AA tandem repeats of D-D-C-[ND]-I-T-G-D-G-N-E-T; that stretch reads DDCNITGDCN…CNITGDCNET (792 aa). N-linked (GlcNAc...) asparagine glycans are attached at residues Asn-67, Asn-79, Asn-91, and Asn-103. Residues Asn-127, Asn-139, and Asn-151 are each glycosylated (N-linked (GlcNAc...) asparagine). An N-linked (GlcNAc...) asparagine glycan is attached at Asn-175. 6 N-linked (GlcNAc...) asparagine glycosylation sites follow: Asn-199, Asn-211, Asn-223, Asn-235, Asn-247, and Asn-259. Asn-283, Asn-295, Asn-307, Asn-319, Asn-331, and Asn-343 each carry an N-linked (GlcNAc...) asparagine glycan. N-linked (GlcNAc...) asparagine glycosylation is found at Asn-367, Asn-379, Asn-391, Asn-403, and Asn-415. Residue Asn-439 is glycosylated (N-linked (GlcNAc...) asparagine). Residues Asn-463, Asn-475, Asn-487, Asn-499, Asn-511, and Asn-523 are each glycosylated (N-linked (GlcNAc...) asparagine). N-linked (GlcNAc...) asparagine glycosylation is found at Asn-547, Asn-559, Asn-571, Asn-583, and Asn-595. Residue Asn-619 is glycosylated (N-linked (GlcNAc...) asparagine). N-linked (GlcNAc...) asparagine glycosylation is found at Asn-643, Asn-655, Asn-667, Asn-679, Asn-691, and Asn-703. 5 N-linked (GlcNAc...) asparagine glycosylation sites follow: Asn-727, Asn-739, Asn-751, Asn-763, and Asn-775. Asn-799 is a glycosylation site (N-linked (GlcNAc...) asparagine). Residue Asn-823 is glycosylated (N-linked (GlcNAc...) asparagine). Residues 883–903 traverse the membrane as a helical segment; the sequence is LLLAGSTFLVLAVGLSAVLFL. Topologically, residues 904 to 945 are cytoplasmic; it reads GRERQNAVVICDNEVMMEEVPGCLSDASFAVPVTQSSDEARP.

It is found in the flagellar pocket. Its subcellular location is the cell membrane. Its function is as follows. Supposed to function as cell surface receptor. Possibly involved in receptor-mediated endocytosis. The chain is Cysteine-rich, acidic integral membrane protein (CRAM) from Trypanosoma brucei brucei.